The primary structure comprises 337 residues: GTPase Obg (337 aa).

The region spanning 1–158 is the Obg domain; sequence MFIDEVRILV…KRLRLELKLL (158 aa). 2 stretches are compositionally biased toward basic and acidic residues: residues 61 to 74 and 137 to 146; these read NPEH…HGEG and PTEHEPGRPG. 2 disordered regions span residues 61–83 and 119–146; these read NPEH…AEGR and GGRG…GRPG. Positions 159–330 constitute an OBG-type G domain; the sequence is ADVGLVGFPN…LKHAMADRVL (172 aa). Residues 165-172, 190-194, 212-215, 282-285, and 311-313 each bind GTP; these read GFPNAGKS, FTTLE, DIPG, TKMD, and SSA. Residues Ser172 and Thr192 each coordinate Mg(2+).

It belongs to the TRAFAC class OBG-HflX-like GTPase superfamily. OBG GTPase family. As to quaternary structure, monomer. Mg(2+) serves as cofactor.

It is found in the cytoplasm. Functionally, an essential GTPase which binds GTP, GDP and possibly (p)ppGpp with moderate affinity, with high nucleotide exchange rates and a fairly low GTP hydrolysis rate. Plays a role in control of the cell cycle, stress response, ribosome biogenesis and in those bacteria that undergo differentiation, in morphogenesis control. This chain is GTPase Obg, found in Solibacter usitatus (strain Ellin6076).